Reading from the N-terminus, the 669-residue chain is UvrABC system protein B (669 aa).

The Helicase ATP-binding domain maps to 26–183 (EGLEDGLAHQ…RRLADLQYTR (158 aa)). ATP is bound at residue 39–46 (GVTGSGKT). The short motif at 92–115 (YYDYYQPEAYVPSSDTFIEKDASV) is the Beta-hairpin element. The 163-residue stretch at 431–593 (QVDDLLSEIR…IVPKGLNKKI (163 aa)) folds into the Helicase C-terminal domain. The region spanning 629–664 (EKEIQRLETEMYQHAKDLEFEKAAQTRDKLQTLRAQ) is the UVR domain.

This sequence belongs to the UvrB family. As to quaternary structure, forms a heterotetramer with UvrA during the search for lesions. Interacts with UvrC in an incision complex.

It is found in the cytoplasm. Its function is as follows. The UvrABC repair system catalyzes the recognition and processing of DNA lesions. A damage recognition complex composed of 2 UvrA and 2 UvrB subunits scans DNA for abnormalities. Upon binding of the UvrA(2)B(2) complex to a putative damaged site, the DNA wraps around one UvrB monomer. DNA wrap is dependent on ATP binding by UvrB and probably causes local melting of the DNA helix, facilitating insertion of UvrB beta-hairpin between the DNA strands. Then UvrB probes one DNA strand for the presence of a lesion. If a lesion is found the UvrA subunits dissociate and the UvrB-DNA preincision complex is formed. This complex is subsequently bound by UvrC and the second UvrB is released. If no lesion is found, the DNA wraps around the other UvrB subunit that will check the other stand for damage. The polypeptide is UvrABC system protein B (Proteus mirabilis (strain HI4320)).